Reading from the N-terminus, the 217-residue chain is Small ribosomal subunit protein uS3c (217 aa).

The KH type-2 domain maps to 39 to 109; sequence IRNFLRTKLI…RFRITITYIP (71 aa).

This sequence belongs to the universal ribosomal protein uS3 family. Part of the 30S ribosomal subunit.

The protein localises to the plastid. Its subcellular location is the chloroplast. The sequence is that of Small ribosomal subunit protein uS3c (rps3) from Chlorokybus atmophyticus (Soil alga).